A 337-amino-acid chain; its full sequence is Holliday junction branch migration complex subunit RuvB (337 aa).

Positions 1–179 are large ATPase domain (RuvB-L); the sequence is MTHQVAVLHQ…FAFSARLSYY (179 aa). Residues leucine 18, arginine 19, glycine 60, lysine 63, threonine 64, serine 65, 126–128, arginine 169, tyrosine 179, and arginine 216 each bind ATP; that span reads EDF. Threonine 64 serves as a coordination point for Mg(2+). The tract at residues 180-250 is small ATPAse domain (RuvB-S); sequence SDQDLKEILV…VAEKALAMLL (71 aa). Residues 253–337 are head domain (RuvB-H); it reads DWGLNEIDIK…KNLLSLGEGQ (85 aa). Residues lysine 308 and arginine 313 each coordinate DNA.

The protein belongs to the RuvB family. Homohexamer. Forms an RuvA(8)-RuvB(12)-Holliday junction (HJ) complex. HJ DNA is sandwiched between 2 RuvA tetramers; dsDNA enters through RuvA and exits via RuvB. An RuvB hexamer assembles on each DNA strand where it exits the tetramer. Each RuvB hexamer is contacted by two RuvA subunits (via domain III) on 2 adjacent RuvB subunits; this complex drives branch migration. In the full resolvosome a probable DNA-RuvA(4)-RuvB(12)-RuvC(2) complex forms which resolves the HJ.

The protein localises to the cytoplasm. It catalyses the reaction ATP + H2O = ADP + phosphate + H(+). In terms of biological role, the RuvA-RuvB-RuvC complex processes Holliday junction (HJ) DNA during genetic recombination and DNA repair, while the RuvA-RuvB complex plays an important role in the rescue of blocked DNA replication forks via replication fork reversal (RFR). RuvA specifically binds to HJ cruciform DNA, conferring on it an open structure. The RuvB hexamer acts as an ATP-dependent pump, pulling dsDNA into and through the RuvAB complex. RuvB forms 2 homohexamers on either side of HJ DNA bound by 1 or 2 RuvA tetramers; 4 subunits per hexamer contact DNA at a time. Coordinated motions by a converter formed by DNA-disengaged RuvB subunits stimulates ATP hydrolysis and nucleotide exchange. Immobilization of the converter enables RuvB to convert the ATP-contained energy into a lever motion, pulling 2 nucleotides of DNA out of the RuvA tetramer per ATP hydrolyzed, thus driving DNA branch migration. The RuvB motors rotate together with the DNA substrate, which together with the progressing nucleotide cycle form the mechanistic basis for DNA recombination by continuous HJ branch migration. Branch migration allows RuvC to scan DNA until it finds its consensus sequence, where it cleaves and resolves cruciform DNA. This Chlamydia pneumoniae (Chlamydophila pneumoniae) protein is Holliday junction branch migration complex subunit RuvB.